A 498-amino-acid chain; its full sequence is ATP synthase subunit beta, chloroplastic (498 aa).

172 to 179 (GGAGVGKT) contributes to the ATP binding site.

Belongs to the ATPase alpha/beta chains family. In terms of assembly, F-type ATPases have 2 components, CF(1) - the catalytic core - and CF(0) - the membrane proton channel. CF(1) has five subunits: alpha(3), beta(3), gamma(1), delta(1), epsilon(1). CF(0) has four main subunits: a(1), b(1), b'(1) and c(9-12).

Its subcellular location is the plastid. It is found in the chloroplast thylakoid membrane. The enzyme catalyses ATP + H2O + 4 H(+)(in) = ADP + phosphate + 5 H(+)(out). Functionally, produces ATP from ADP in the presence of a proton gradient across the membrane. The catalytic sites are hosted primarily by the beta subunits. This chain is ATP synthase subunit beta, chloroplastic, found in Calamus usitatus (Palm tree).